A 152-amino-acid chain; its full sequence is Acidic phospholipase A2 1 (152 aa).

Positions 1–19 (MNPAYFLVLAAVCVSLLGA) are cleaved as a signal peptide. Residues 20–27 (ANIPPQPL) constitute a propeptide that is removed on maturation. 7 cysteine pairs are disulfide-bonded: cysteine 38/cysteine 104, cysteine 54/cysteine 151, cysteine 56/cysteine 72, cysteine 71/cysteine 132, cysteine 78/cysteine 125, cysteine 88/cysteine 118, and cysteine 111/cysteine 123. Ca(2+) is bound by residues tyrosine 55, glycine 57, and glycine 59. Histidine 75 is a catalytic residue. Residue aspartate 76 participates in Ca(2+) binding. Aspartate 126 is an active-site residue.

This sequence belongs to the phospholipase A2 family. Group I subfamily. D49 sub-subfamily. Ca(2+) serves as cofactor. In terms of tissue distribution, expressed by the venom gland.

Its subcellular location is the secreted. The catalysed reaction is a 1,2-diacyl-sn-glycero-3-phosphocholine + H2O = a 1-acyl-sn-glycero-3-phosphocholine + a fatty acid + H(+). PLA2 catalyzes the calcium-dependent hydrolysis of the 2-acyl groups in 3-sn-phosphoglycerides. The polypeptide is Acidic phospholipase A2 1 (Bungarus candidus (Malayan krait)).